The chain runs to 188 residues: MSQIIHAKDLRPGNTFIYKNNLYLVIENSFNKTAMREGIVKCKVKNLRTSSITVEVLTGEKLERAIIDKVKAMYSYADKNTLVFMDGESFEQIEIDANKLKWEKNFIVDGSEVSILKYGEEVLNVSLPDQVSLLVDFAEEAVQGNTVQTAMKKARLETGLEIEVPQFIKTGEKIIVNTVDGKYVGRDK.

It belongs to the elongation factor P family.

It localises to the cytoplasm. It functions in the pathway protein biosynthesis; polypeptide chain elongation. Its function is as follows. Involved in peptide bond synthesis. Stimulates efficient translation and peptide-bond synthesis on native or reconstituted 70S ribosomes in vitro. Probably functions indirectly by altering the affinity of the ribosome for aminoacyl-tRNA, thus increasing their reactivity as acceptors for peptidyl transferase. This chain is Elongation factor P, found in Malacoplasma penetrans (strain HF-2) (Mycoplasma penetrans).